Here is a 525-residue protein sequence, read N- to C-terminus: Peptide chain release factor 3 (525 aa).

One can recognise a tr-type G domain in the interval E11–E279. Residues S20–T27, D88–H92, and N142–D145 contribute to the GTP site.

Belongs to the TRAFAC class translation factor GTPase superfamily. Classic translation factor GTPase family. PrfC subfamily.

Its subcellular location is the cytoplasm. Its function is as follows. Increases the formation of ribosomal termination complexes and stimulates activities of RF-1 and RF-2. It binds guanine nucleotides and has strong preference for UGA stop codons. It may interact directly with the ribosome. The stimulation of RF-1 and RF-2 is significantly reduced by GTP and GDP, but not by GMP. The chain is Peptide chain release factor 3 from Latilactobacillus sakei subsp. sakei (strain 23K) (Lactobacillus sakei subsp. sakei).